The following is a 274-amino-acid chain: Type II restriction enzyme HgiEI (274 aa).

Belongs to the TdeIII type II restriction endonuclease family.

The enzyme catalyses Endonucleolytic cleavage of DNA to give specific double-stranded fragments with terminal 5'-phosphates.. Functionally, a P subtype restriction enzyme that recognizes the double-stranded sequence 5'-GGWCC-3' and cleaves after G-1. This system is more active than isoschizomeric RM.HgiBI. The chain is Type II restriction enzyme HgiEI from Herpetosiphon aurantiacus (Herpetosiphon giganteus).